Reading from the N-terminus, the 197-residue chain is Probable chemoreceptor glutamine deamidase CheD 2 (197 aa).

Belongs to the CheD family.

The catalysed reaction is L-glutaminyl-[protein] + H2O = L-glutamyl-[protein] + NH4(+). Probably deamidates glutamine residues to glutamate on methyl-accepting chemotaxis receptors (MCPs), playing an important role in chemotaxis. In Dechloromonas aromatica (strain RCB), this protein is Probable chemoreceptor glutamine deamidase CheD 2.